Reading from the N-terminus, the 240-residue chain is Mitochondrial transcription rescue factor 1 (240 aa).

Residues methionine 1–leucine 83 constitute a mitochondrion transit peptide. Residues serine 92 to glycine 127 are disordered. The span at alanine 101–serine 124 shows a compositional bias: acidic residues. 2 positions are modified to phosphoserine: serine 106 and serine 116. An S4 RNA-binding domain is found at phenylalanine 142 to glutamate 217.

As to quaternary structure, monomer. Interacts with POLRMT. Interacts (via S4 domain) with MTRFR (via C-terminus). Associates with mitoribosomal S39 large subunit, peptidyl tRNA and nascent chain.

It is found in the mitochondrion matrix. In terms of biological role, mitochondrial RNA-binding protein involved in mitochondrial transcription regulation. Functions as a protective factor to maintain proper mitochondrial RNA level during stress. Acts at the transcription level and its protective function depends on its RNA binding ability. Part of a mitoribosome-associated quality control pathway that prevents aberrant translation by responding to interruptions during elongation. As heterodimer with MTRF, ejects the unfinished nascent chain and peptidyl transfer RNA (tRNA), respectively, from stalled ribosomes. Recruitment of mitoribosome biogenesis factors to these quality control intermediates suggests additional roles for MTRES1 and MTRF during mitoribosome rescue. The polypeptide is Mitochondrial transcription rescue factor 1 (Mtres1) (Mus musculus (Mouse)).